We begin with the raw amino-acid sequence, 390 residues long: Protein TAB2 homolog, chloroplastic (390 aa).

The transit peptide at 1 to 69 (MTTATAIVAG…RSISSESSTE (69 aa)) directs the protein to the chloroplast. Residues 16 to 85 (RRSLPLPNPP…IADEEVEAEN (70 aa)) are disordered. Residues 61–75 (SISSESSTEASAAAD) are compositionally biased toward low complexity.

The protein resides in the plastid. Its subcellular location is the chloroplast. In terms of biological role, nuclear genome-encoded factor involved in the biogenesis of photosystem I (PSI). Required for the accumulation of PSI during plant development. Does not seem to be required for the translation of mRNAs of the PSI subunits. This is Protein TAB2 homolog, chloroplastic from Zea mays (Maize).